The sequence spans 367 residues: D-alanine--D-alanine ligase (367 aa).

An ATP-grasp domain is found at 145–351 (KRLLRDAGLP…QPALMDELVA (207 aa)). Residue 174-229 (RAVGSSELFVKPANLGSSVGISKTRDAAEFEAACQLALRFDRKILIERCIAPVREI) participates in ATP binding. The Mg(2+) site is built by Asp306, Glu318, and Asn320.

It belongs to the D-alanine--D-alanine ligase family. The cofactor is Mg(2+). It depends on Mn(2+) as a cofactor.

It is found in the cytoplasm. It carries out the reaction 2 D-alanine + ATP = D-alanyl-D-alanine + ADP + phosphate + H(+). It participates in cell wall biogenesis; peptidoglycan biosynthesis. In terms of biological role, cell wall formation. The sequence is that of D-alanine--D-alanine ligase from Bradyrhizobium sp. (strain ORS 278).